The following is a 450-amino-acid chain: Protein tweety homolog 1 (450 aa).

At 1–43 the chain is on the extracellular side; it reads MGAPPGYRPSAWVHLLHQLPRADFQLRPVPSGFAPRDQEYQQA. The chain crosses the membrane as a helical span at residues 44–64; the sequence is LLLVAALAGLGLGLSLIFIAV. The Cytoplasmic segment spans residues 65-88; it reads YLIRFCCCRPPEPHGAKSPPPGGG. Residues 89 to 109 traverse the membrane as a helical segment; it reads CVTWSCIAALLVGCAGIGIGF. The Extracellular portion of the chain corresponds to 110 to 214; it reads YGNSETSDGV…DVTFVEEYRW (105 aa). Residue Asn-130 is glycosylated (N-linked (GlcNAc...) asparagine). The helical transmembrane segment at 215–235 threads the bilayer; that stretch reads LAYVLLLLLVLLVCLFTLLGL. The Cytoplasmic portion of the chain corresponds to 236 to 240; that stretch reads AKQSK. The chain crosses the membrane as a helical span at residues 241-261; sequence WLVVVMTAMSLLVLVLSWGSM. The Extracellular segment spans residues 262–390; the sequence is GLEAATAVGL…LRGLCEDALE (129 aa). Intrachain disulfides connect Cys-275/Cys-385 and Cys-303/Cys-370. 2 N-linked (GlcNAc...) asparagine glycosylation sites follow: Asn-284 and Asn-355. The helical transmembrane segment at 391–411 threads the bilayer; that stretch reads GLLFLMLFSLLSAGALATTLC. The Cytoplasmic segment spans residues 412 to 450; sequence SLPRAWALFPPSDDYDDTDDDDPFNPQESKRFVQWQSSI. Residues 428-450 are disordered; the sequence is DTDDDDPFNPQESKRFVQWQSSI. A Phosphoserine modification is found at Ser-440.

This sequence belongs to the tweety family. As to quaternary structure, homotetramer; disulfide-linked. Homodimer. In terms of processing, N-glycosylated. Contains high-mannose, hybrid and complex oligosaccharides. Expressed in the astrocytes (at protein level). Restricted mainly to neural tissues. Strongly expressed in brain and eye.

It localises to the cell membrane. The catalysed reaction is chloride(in) = chloride(out). It carries out the reaction L-glutamate(out) = L-glutamate(in). Its activity is regulated as follows. Inhibited by (4-[(2-butyl-6,7-dichloro-2- cyclopentyl-2,3-dihydro-1-oxo-1H-inden-5-yl)oxy]butanoic acid). Functionally, calcium-independent, swelling-dependent volume-regulated anion channel (VRAC-swell) which plays a pivotal role in the process of regulatory volume decrease (RVD) in the brain through the efflux of anions like chloride and organic osmolytes like glutamate. In Mus musculus (Mouse), this protein is Protein tweety homolog 1 (Ttyh1).